Consider the following 217-residue polypeptide: Ribonuclease HII (217 aa).

Positions 27–216 constitute an RNase H type-2 domain; it reads SQVAGVDEAG…VKESIQEGVC (190 aa). A divalent metal cation is bound by residues Asp-33, Glu-34, and Asp-126.

It belongs to the RNase HII family. Requires Mn(2+) as cofactor. The cofactor is Mg(2+).

The protein localises to the cytoplasm. The enzyme catalyses Endonucleolytic cleavage to 5'-phosphomonoester.. Functionally, endonuclease that specifically degrades the RNA of RNA-DNA hybrids. In Chlamydia trachomatis serovar L2 (strain ATCC VR-902B / DSM 19102 / 434/Bu), this protein is Ribonuclease HII.